We begin with the raw amino-acid sequence, 266 residues long: Probable phosphoadenosine phosphosulfate reductase (266 aa).

Positions 219 to 246 are disordered; it reads TQPVREGEDERAGRWRGREKTECGLHSH. Residues 223-243 are compositionally biased toward basic and acidic residues; it reads REGEDERAGRWRGREKTECGL.

This sequence belongs to the PAPS reductase family. CysH subfamily.

Its subcellular location is the cytoplasm. It localises to the nucleus. The enzyme catalyses [thioredoxin]-disulfide + sulfite + adenosine 3',5'-bisphosphate + 2 H(+) = [thioredoxin]-dithiol + 3'-phosphoadenylyl sulfate. It participates in sulfur metabolism; hydrogen sulfide biosynthesis; sulfite from sulfate: step 3/3. Functionally, the NADP dependent reduction of PAPS into sulfite involves thioredoxin which probably plays the role of a thiol carrier. Required for methionine synthesis. The chain is Probable phosphoadenosine phosphosulfate reductase (met16) from Schizosaccharomyces pombe (strain 972 / ATCC 24843) (Fission yeast).